The primary structure comprises 444 residues: Phosphoglucosamine mutase (444 aa).

The active-site Phosphoserine intermediate is the Ser102. Mg(2+) is bound by residues Ser102, Asp241, Asp243, and Asp245. Position 102 is a phosphoserine (Ser102).

It belongs to the phosphohexose mutase family. Mg(2+) serves as cofactor. Post-translationally, activated by phosphorylation.

The catalysed reaction is alpha-D-glucosamine 1-phosphate = D-glucosamine 6-phosphate. Catalyzes the conversion of glucosamine-6-phosphate to glucosamine-1-phosphate. In Histophilus somni (strain 129Pt) (Haemophilus somnus), this protein is Phosphoglucosamine mutase.